We begin with the raw amino-acid sequence, 169 residues long: Tumor suppressor ARF (169 aa).

Residues 1-63 (MGRRFLVTVR…RRGPHRNPGP (63 aa)) are interaction with CDK5RAP3 and MDM2. The interval 54-73 (RRGPHRNPGPGDDDGQRSRS) is disordered.

As to quaternary structure, does not interact with cyclins, CDK1, CDK2, CDK4, CDK5 or CDK6. Interacts with COMMD1. Binds to BCL6, E2F1, HUWE1, MDM2, MYC, NPM1/B23, TOP1/TOPOI and UBE2I/UBC9. Interacts with TBRG1. Interacts with CDKN2AIP and E4F1. Interacts with CDK5RAP3 and MDM2; form a ternary complex involved in regulation of p53/TP53. Interacts with NOP53; the interaction is direct and promotes ARF nucleoplasmic relocalization and ubiquitin-mediated proteasomal degradation. Interacts with TTF1 (via the N-terminal region (NRD) and a C-terminal region); the interaction is direct and inhibits the nucleolar localization of TTF1. Interacts with C1QBP. In terms of processing, ubiquitinated in normal cells by TRIP12 via the ubiquitin fusion degradation (UFD) pathway, a process that mediates ubiquitination at the N-terminus, regardless of the absence of lysine residues. Ubiquitination leads to its proteasomal degradation. In cancer cells, however, TRIP12 is located in a different cell compartment, preventing ubiquitination and degradation.

Its subcellular location is the nucleus. The protein resides in the nucleolus. The protein localises to the nucleoplasm. It is found in the mitochondrion. Functionally, capable of inducing cell cycle arrest in G1 and G2 phases. Acts as a tumor suppressor. Binds to MDM2 and blocks its nucleocytoplasmic shuttling by sequestering it in the nucleolus. This inhibits the oncogenic action of MDM2 by blocking MDM2-induced degradation of p53 and enhancing p53-dependent transactivation and apoptosis. Also induces G2 arrest and apoptosis in a p53-independent manner by preventing the activation of cyclin B1/CDC2 complexes. Binds to BCL6 and down-regulates BCL6-induced transcriptional repression. Binds to E2F1 and MYC and blocks their transcriptional activator activity but has no effect on MYC transcriptional repression. Binds to TOP1/TOPOI and stimulates its activity. This complex binds to rRNA gene promoters and may play a role in rRNA transcription and/or maturation. Interacts with NPM1/B23 and promotes its polyubiquitination and degradation, thus inhibiting rRNA processing. Plays a role in inhibiting ribosome biogenesis, perhaps by binding to the nucleolar localization sequence of transcription termination factor TTF1, and thereby preventing nucleolar localization of TTF1. Interacts with COMMD1 and promotes its 'Lys63'-linked polyubiquitination. Interacts with UBE2I/UBC9 and enhances sumoylation of a number of its binding partners including MDM2 and E2F1. Binds to HUWE1 and represses its ubiquitin ligase activity. May play a role in controlling cell proliferation and apoptosis during mammary gland development. Its function is as follows. May be involved in regulation of autophagy and caspase-independent cell death; the short-lived mitochondrial isoform is stabilized by C1QBP. This Mus musculus (Mouse) protein is Tumor suppressor ARF.